The chain runs to 269 residues: MGYFEQKFLQLQKQKQGAFVPFVTLCDPNFDRSFEIICTLVDNGADALELGFPFSDPLLDGSVIQAANHRALNAGCSTKESFQLIAKVRSKYPDIPISLLLCANLIYAQTLDGFYQRCAEVGVDAVLVADIPLLASEPYIQSAQKYDIQPVFICPPNADETTLKAVAEKSKGYIYLVSRAGVTSAENQQSAKNLANLIKGLKKYGSAPILQGFGIAQPQQVKDVLKSGVAGAISGSAIVQIIEQNLTDREKCLSELAEFVQKMKQATLL.

Residues glutamate 49 and aspartate 60 each act as proton acceptor in the active site.

Belongs to the TrpA family. As to quaternary structure, tetramer of two alpha and two beta chains.

The catalysed reaction is (1S,2R)-1-C-(indol-3-yl)glycerol 3-phosphate + L-serine = D-glyceraldehyde 3-phosphate + L-tryptophan + H2O. Its pathway is amino-acid biosynthesis; L-tryptophan biosynthesis; L-tryptophan from chorismate: step 5/5. The alpha subunit is responsible for the aldol cleavage of indoleglycerol phosphate to indole and glyceraldehyde 3-phosphate. The sequence is that of Tryptophan synthase alpha chain from Histophilus somni (strain 2336) (Haemophilus somnus).